The primary structure comprises 167 residues: NAD(P)H-quinone oxidoreductase subunit I, chloroplastic (167 aa).

2 consecutive 4Fe-4S ferredoxin-type domains span residues 55–84 (GRIH…VDWK) and 95–124 (LNYS…MTEE). Cys64, Cys67, Cys70, Cys74, Cys104, Cys107, Cys110, and Cys114 together coordinate [4Fe-4S] cluster.

It belongs to the complex I 23 kDa subunit family. As to quaternary structure, NDH is composed of at least 16 different subunits, 5 of which are encoded in the nucleus. [4Fe-4S] cluster serves as cofactor.

The protein localises to the plastid. It localises to the chloroplast thylakoid membrane. The catalysed reaction is a plastoquinone + NADH + (n+1) H(+)(in) = a plastoquinol + NAD(+) + n H(+)(out). The enzyme catalyses a plastoquinone + NADPH + (n+1) H(+)(in) = a plastoquinol + NADP(+) + n H(+)(out). In terms of biological role, NDH shuttles electrons from NAD(P)H:plastoquinone, via FMN and iron-sulfur (Fe-S) centers, to quinones in the photosynthetic chain and possibly in a chloroplast respiratory chain. The immediate electron acceptor for the enzyme in this species is believed to be plastoquinone. Couples the redox reaction to proton translocation, and thus conserves the redox energy in a proton gradient. This Pelargonium hortorum (Common geranium) protein is NAD(P)H-quinone oxidoreductase subunit I, chloroplastic.